The sequence spans 307 residues: Leucine-rich repeat-containing protein 25 (307 aa).

The N-terminal stretch at 1 to 20 (MGGPLMWALLLPLLLHQAGS) is a signal peptide. The Extracellular portion of the chain corresponds to 21–168 (QTSSCSVLSG…SCPSGLTKIA (148 aa)). Asparagine 44 and asparagine 56 each carry an N-linked (GlcNAc...) asparagine glycan. LRR repeat units follow at residues 63 to 86 (SVQL…RDLE) and 87 to 110 (QLQL…XXGC). N-linked (GlcNAc...) asparagine glycosylation is found at asparagine 95, asparagine 132, and asparagine 151. A helical transmembrane segment spans residues 169–189 (IGALAASGSLLLVLAIAGPVL). Topologically, residues 190–307 (AWRFCRHRMD…DDEEYVVPGR (118 aa)) are cytoplasmic. A disordered region spans residues 205 to 249 (TWASQDGSRSGSGRQPRYSSQGRRPKSPANTPPRSSTPDYENVFV). The span at 211–226 (GSRSGSGRQPRYSSQG) shows a compositional bias: low complexity. The segment covering 232 to 243 (PANTPPRSSTPD) has biased composition (polar residues). Tyrosine 286 bears the Phosphotyrosine mark.

Interacts with RIGI. Interacts with SQSTM1. Interacts with p65/RELA; this interaction promotes the degradation of RELA through autophagy.

The protein resides in the membrane. It is found in the cytoplasm. In terms of biological role, plays a role in the inhibition of RLR-mediated type I interferon signaling pathway by targeting RIGI for autophagic degradation. Interacts specifically with ISG15-associated RIGI to promote interaction between RIGI and the autophagic cargo receptor p62/SQSTM1 to mediate RIGI degradation via selective autophagy. Plays also a role in the inhibition of NF-kappa-B signaling pathway and inflammatory response by promoting the degradation of p65/RELA. This Bos taurus (Bovine) protein is Leucine-rich repeat-containing protein 25 (LRRC25).